The following is a 670-amino-acid chain: UvrABC system protein B (670 aa).

Residues 28 to 414 enclose the Helicase ATP-binding domain; that stretch reads NNFKQGLQEQ…KKIPIVEQII (387 aa). 41-48 is a binding site for ATP; sequence GATGTGKT. The short motif at 94–117 is the Beta-hairpin element; it reads YYDYYQPEAYVASSDTYIEKDSKI. One can recognise a Helicase C-terminal domain in the interval 432 to 594; it reads QMDDLYFEIK…VTPTALNKTI (163 aa). The 36-residue stretch at 631 to 666 folds into the UVR domain; the sequence is NKEIKRLQKMMKEAAKTLDFEKAATLRDLILELEKK.

This sequence belongs to the UvrB family. In terms of assembly, forms a heterotetramer with UvrA during the search for lesions. Interacts with UvrC in an incision complex.

It localises to the cytoplasm. The UvrABC repair system catalyzes the recognition and processing of DNA lesions. A damage recognition complex composed of 2 UvrA and 2 UvrB subunits scans DNA for abnormalities. Upon binding of the UvrA(2)B(2) complex to a putative damaged site, the DNA wraps around one UvrB monomer. DNA wrap is dependent on ATP binding by UvrB and probably causes local melting of the DNA helix, facilitating insertion of UvrB beta-hairpin between the DNA strands. Then UvrB probes one DNA strand for the presence of a lesion. If a lesion is found the UvrA subunits dissociate and the UvrB-DNA preincision complex is formed. This complex is subsequently bound by UvrC and the second UvrB is released. If no lesion is found, the DNA wraps around the other UvrB subunit that will check the other stand for damage. The protein is UvrABC system protein B of Onion yellows phytoplasma (strain OY-M).